A 312-amino-acid chain; its full sequence is uncharacterized protein (312 aa).

Active-site charge relay system residues include Ser200, Asp261, and His292.

Belongs to the AB hydrolase superfamily. AB hydrolase 2 family.

This is an uncharacterized protein from Acanthamoeba polyphaga mimivirus (APMV).